We begin with the raw amino-acid sequence, 93 residues long: YcgL domain-containing protein Ssed_2518 (93 aa).

Residues 1–85 (MICAVYKSRR…PKVNLLEQHK (85 aa)) form the YcgL domain.

This chain is YcgL domain-containing protein Ssed_2518, found in Shewanella sediminis (strain HAW-EB3).